The chain runs to 699 residues: Polyribonucleotide nucleotidyltransferase (699 aa).

Residues Asp485 and Asp491 each contribute to the Mg(2+) site. The 60-residue stretch at 552 to 611 folds into the KH domain; that stretch reads PRITTIKINPEKIRDVIGKGGAVIRALTEETGTTIELEDDGTVRIASSNGEATKEAIRRI. One can recognise an S1 motif domain in the interval 621–689; it reads GRIYNGKVIR…RQGRVRLSIK (69 aa).

The protein belongs to the polyribonucleotide nucleotidyltransferase family. Component of the RNA degradosome, which is a multiprotein complex involved in RNA processing and mRNA degradation. It depends on Mg(2+) as a cofactor.

It localises to the cytoplasm. The catalysed reaction is RNA(n+1) + phosphate = RNA(n) + a ribonucleoside 5'-diphosphate. Functionally, involved in mRNA degradation. Catalyzes the phosphorolysis of single-stranded polyribonucleotides processively in the 3'- to 5'-direction. The chain is Polyribonucleotide nucleotidyltransferase from Shewanella sp. (strain W3-18-1).